We begin with the raw amino-acid sequence, 103 residues long: Small ribosomal subunit protein uS10 (103 aa).

Belongs to the universal ribosomal protein uS10 family. Part of the 30S ribosomal subunit.

In terms of biological role, involved in the binding of tRNA to the ribosomes. The protein is Small ribosomal subunit protein uS10 of Burkholderia mallei (strain NCTC 10247).